The chain runs to 369 residues: Peptide chain release factor subunit 1 (369 aa).

Belongs to the eukaryotic release factor 1 family. Heterodimer of two subunits, one of which binds GTP.

The protein localises to the cytoplasm. Directs the termination of nascent peptide synthesis (translation) in response to the termination codons UAA, UAG and UGA. The protein is Peptide chain release factor subunit 1 (prf1) of Saccharolobus solfataricus (strain ATCC 35092 / DSM 1617 / JCM 11322 / P2) (Sulfolobus solfataricus).